Consider the following 91-residue polypeptide: Small ribosomal subunit protein bS16 (91 aa).

It belongs to the bacterial ribosomal protein bS16 family.

This is Small ribosomal subunit protein bS16 from Exiguobacterium sp. (strain ATCC BAA-1283 / AT1b).